The following is a 346-amino-acid chain: MAMAQKLSHLLPSLRQVIQEPQLSLQPEPVFTVDRAEVPPLFWKPYIYAGYRPLHQTWRFYFRTLFQQHNEAVNVWTHLLAALVLLLRLALFVETVDFWGDPHALPLFIIVLASFTYLSFSALAHLLQAKSEFWHYSFFFLDYVGVAVYQFGSALAHFYYAIEPAWHAQVQAVFLPMAAFLAWLSCIGSCYNKYIQKPGLLGRTCQEVPSVLAYALDISPVVHRIFVSSDPTTDDPALLYHKCQVVFFLLAAAFFSTFMPERWFPGSCHVFGQGHQLFHIFLVLCTLAQLEAVALDYEARRPIYEPLHTHWPHNFSGLFLLTVGSSILTAFLLSQLVQRKLDQKTK.

Residues 1–72 (MAMAQKLSHL…RTLFQQHNEA (72 aa)) are Cytoplasmic-facing. The helical transmembrane segment at 73–93 (VNVWTHLLAALVLLLRLALFV) threads the bilayer. Over 94-103 (ETVDFWGDPH) the chain is Extracellular. A helical transmembrane segment spans residues 104 to 124 (ALPLFIIVLASFTYLSFSALA). At 125–137 (HLLQAKSEFWHYS) the chain is on the cytoplasmic side. The helical transmembrane segment at 138–158 (FFFLDYVGVAVYQFGSALAHF) threads the bilayer. The Extracellular segment spans residues 159-169 (YYAIEPAWHAQ). Residues 170-190 (VQAVFLPMAAFLAWLSCIGSC) traverse the membrane as a helical segment. Topologically, residues 191-237 (YNKYIQKPGLLGRTCQEVPSVLAYALDISPVVHRIFVSSDPTTDDPA) are cytoplasmic. A helical transmembrane segment spans residues 238–258 (LLYHKCQVVFFLLAAAFFSTF). At 259-276 (MPERWFPGSCHVFGQGHQ) the chain is on the extracellular side. The helical transmembrane segment at 277–297 (LFHIFLVLCTLAQLEAVALDY) threads the bilayer. Residues 298-316 (EARRPIYEPLHTHWPHNFS) lie on the Cytoplasmic side of the membrane. A helical transmembrane segment spans residues 317–337 (GLFLLTVGSSILTAFLLSQLV). At 338-346 (QRKLDQKTK) the chain is on the extracellular side.

This sequence belongs to the ADIPOR family. As to expression, expressed in a wide range of tissues including ovary, testis, placenta, uterus and bladder.

The protein resides in the cell membrane. Functionally, plasma membrane progesterone (P4) receptor coupled to G proteins. Seems to act through a G(i) mediated pathway. May be involved in oocyte maturation. Involved in neurosteroid inhibition of apoptosis. Also binds dehydroepiandrosterone (DHEA), pregnanolone, pregnenolone and allopregnanolone. This chain is Membrane progestin receptor alpha, found in Homo sapiens (Human).